The primary structure comprises 371 residues: Nuclear hormone receptor family member nhr-51 (371 aa).

Positions 2–77 (NKNCLICHRK…MGMQAFPRRV (76 aa)) form a DNA-binding region, nuclear receptor. 2 NR C4-type zinc fingers span residues 5–25 (CLIC…CFAC) and 41–60 (CQKF…CKAC). One can recognise an NR LBD domain in the interval 98–337 (MDEQRHWRML…KQLVTDTFVD (240 aa)).

The protein belongs to the nuclear hormone receptor family.

The protein resides in the nucleus. Orphan nuclear receptor. The protein is Nuclear hormone receptor family member nhr-51 (nhr-51) of Caenorhabditis elegans.